We begin with the raw amino-acid sequence, 286 residues long: Putative movement protein 3 (286 aa).

This sequence belongs to the nucleorhabdovirus type-1 movement protein family.

Its function is as follows. Transports viral genome to neighboring plant cells directly through plasmosdesmata, without any budding. The movement protein allows efficient cell to cell propagation, by bypassing the host cell wall barrier. The sequence is that of Putative movement protein 3 (3) from Rottboellia (Sorghum).